The chain runs to 177 residues: R-phycoerythrin beta chain (177 aa).

Residues Asn35 and Asp39 each coordinate (2R,3E)-phycoerythrobilin. Phycourobilin contacts are provided by Cys50, Asp54, and Cys61. (2R,3E)-phycoerythrobilin contacts are provided by residues Asn72, 77–78 (RR), Cys82, and 84–85 (RD). Residue Asn72 is modified to N4-methylasparagine. Position 147–148 (147–148 (SQ)) interacts with phycourobilin. Residues Ile154 and Cys158 each coordinate (2R,3E)-phycoerythrobilin.

This sequence belongs to the phycobiliprotein family. In terms of assembly, heterododecamer of 6 alpha and 6 beta chains. The basic functional unit of phycobiliproteins is a ring-shaped hexamer formed from two back-to-back trimers contacting via the alpha chain subunits. The trimers are composed of alpha/beta subunit heterodimers arranged around a three-fold axis of symmetry. The phycoerythrins also contain a gamma subunit which is located in the center of the hexamer. Contains two covalently linked phycoerythrobilin chromophores and one covalently linked phycourobilin chromophore.

It localises to the plastid. It is found in the chloroplast thylakoid membrane. Light-harvesting photosynthetic tetrapyrrole chromophore-protein from the phycobiliprotein complex. The chain is R-phycoerythrin beta chain (rpeB) from Agarophyton chilense (Red seaweed).